Here is a 66-residue protein sequence, read N- to C-terminus: Large ribosomal subunit protein bL31 (66 aa).

Zn(2+) is bound by residues Cys16, Cys18, Cys36, and Cys39.

Belongs to the bacterial ribosomal protein bL31 family. Type A subfamily. In terms of assembly, part of the 50S ribosomal subunit. The cofactor is Zn(2+).

Functionally, binds the 23S rRNA. This chain is Large ribosomal subunit protein bL31, found in Nautilia profundicola (strain ATCC BAA-1463 / DSM 18972 / AmH).